A 555-amino-acid polypeptide reads, in one-letter code: Protein peste (555 aa).

Over 1-7 (MTSRTRH) the chain is Cytoplasmic. The chain crosses the membrane as a helical span at residues 8-28 (CARLGIVLLGICCIASGIYLF). At 29 to 434 (RNWIDMFTRM…VRVSEEIAAD (406 aa)) the chain is on the extracellular side. 7 N-linked (GlcNAc...) asparagine glycosylation sites follow: Asn-70, Asn-110, Asn-129, Asn-213, Asn-242, Asn-312, and Asn-342. Residues 435-455 (IALVPLIVLLGQIVTGILLAG) traverse the membrane as a helical segment. The Cytoplasmic portion of the chain corresponds to 456–555 (GLICTCWYPT…SEDSPDVVVR (100 aa)).

This sequence belongs to the CD36 family.

It is found in the cell membrane. (Microbial infection) Plays a role in mycobacterial infection. Mediates infection by M.fortuitum and uptake of M.smegmatis. The protein is Protein peste of Drosophila melanogaster (Fruit fly).